Reading from the N-terminus, the 368-residue chain is 3-dehydroquinate synthase (368 aa).

Residues 110–114 (GVIGD), 134–135 (TS), Lys-147, and Lys-156 each bind NAD(+). The Zn(2+) site is built by Glu-189, His-254, and His-271.

This sequence belongs to the sugar phosphate cyclases superfamily. Dehydroquinate synthase family. NAD(+) is required as a cofactor. It depends on Co(2+) as a cofactor. Zn(2+) serves as cofactor.

It localises to the cytoplasm. It carries out the reaction 7-phospho-2-dehydro-3-deoxy-D-arabino-heptonate = 3-dehydroquinate + phosphate. Its pathway is metabolic intermediate biosynthesis; chorismate biosynthesis; chorismate from D-erythrose 4-phosphate and phosphoenolpyruvate: step 2/7. Functionally, catalyzes the conversion of 3-deoxy-D-arabino-heptulosonate 7-phosphate (DAHP) to dehydroquinate (DHQ). This is 3-dehydroquinate synthase from Thermosynechococcus vestitus (strain NIES-2133 / IAM M-273 / BP-1).